The sequence spans 1374 residues: Serine/threonine-protein kinase LMTK1 (1374 aa).

The chain crosses the membrane as a helical span at residues 32-52 (LAVVAVSFSGLFAVIVLMLAC). The region spanning 125-395 (LLYLKEIGRG…PTAEEVHLLL (271 aa)) is the Protein kinase domain. Residues 131–139 (IGRGWFGKV) and Lys-156 each bind ATP. Residue Asp-253 is the Proton acceptor of the active site. The residue at position 495 (Ser-495) is a Phosphoserine. 5 disordered regions span residues 542–622 (GHDP…LAEG), 667–731 (VGAR…LLGL), 765–1195 (WTET…PAVP), 1245–1302 (QESP…AWDD), and 1320–1374 (AAPA…SKEA). Residues 606-620 (PSRSPSPSAGPLSLA) show a composition bias toward low complexity. Positions 680 to 690 (SNVSANNNSGS) are enriched in polar residues. Composition is skewed to low complexity over residues 719-731 (PEPG…LLGL), 801-831 (SPSQ…TPAT), and 847-856 (SSSSPEVEAP). Residues 865-878 (EATSGIFTDTSSDG) are compositionally biased toward polar residues. The segment covering 900–914 (PDSLDSLDIPSSASD) has biased composition (low complexity). Over residues 978–987 (RLSTSLSGLN) the composition is skewed to polar residues. Residue Ser-1029 is modified to Phosphoserine. Polar residues predominate over residues 1063–1073 (EGSSPEPSTCP). A compositionally biased stretch (low complexity) spans 1138-1155 (TPRAPLRLALPGLPAALE). Acidic residues predominate over residues 1158–1173 (PEEEEEDSEDSDESDE). A phosphoserine mark is found at Ser-1168, Ser-1171, Ser-1184, Ser-1187, and Ser-1262. Over residues 1272 to 1291 (GSPSAPNRPQQADGSPNGST) the composition is skewed to polar residues. Positions 1321 to 1332 (APAPAAPTPTPA) are enriched in pro residues. Positions 1337–1352 (FTVSPAPTSRFSITHV) are enriched in polar residues. The segment covering 1353 to 1363 (SDSDAESKRGP) has biased composition (basic and acidic residues). Residues 1365 to 1374 (AGAGGESKEA) show a composition bias toward gly residues.

It belongs to the protein kinase superfamily. Tyr protein kinase family. As to quaternary structure, interacts with CDK5. Post-translationally, autophosphorylated. Phosphorylated by CDK5. Expressed in brain.

It is found in the membrane. The protein localises to the cytoplasm. Its subcellular location is the perinuclear region. The catalysed reaction is L-seryl-[protein] + ATP = O-phospho-L-seryl-[protein] + ADP + H(+). The enzyme catalyses L-threonyl-[protein] + ATP = O-phospho-L-threonyl-[protein] + ADP + H(+). Functionally, may be involved in neuronal differentiation. This chain is Serine/threonine-protein kinase LMTK1 (AATK), found in Homo sapiens (Human).